We begin with the raw amino-acid sequence, 146 residues long: MORN repeat-containing protein 4 (146 aa).

MORN repeat units follow at residues 16 to 38 (YRGE…DGGT), 39 to 61 (YLGH…DGSR), 62 to 84 (YEGE…DNMT), and 85 to 107 (FEGE…DGSH).

Interacts with MYO3A. Retina.

The protein resides in the cytoplasm. It localises to the cell projection. The protein localises to the filopodium tip. It is found in the stereocilium. Plays a role in promoting axonal degeneration following neuronal injury by toxic insult or trauma. This Bos taurus (Bovine) protein is MORN repeat-containing protein 4 (MORN4).